A 675-amino-acid chain; its full sequence is MNDISQKAEILLSSSKPVPKTYVPKLGKGDVKDKFEAMQRAREERNQRRSRDEKQRRKEQYIREREWNRRKQEIKEMLASDDEEDVSSKVEKAYVPKLTGTVKGRFAEMEKQRQEEQRKRTEEERKRRIEQDMLEKRKIQRELAKRAEQIEDINNTGTESASEEGDDSLLITVVPVKSYKTSGKMKKNFEDLEKEREEKERIKYEEDKRIRYEEQRPSLKEAKCLSLVMDDEIESEAKKESLSPGKLKLTFEELERQRQENRKKQAEEEARKRLEEEKRAFEEARRQMVNEDEENQDTAKIFKGYRPGKLKLSFEEMERQRREDEKRKAEEEARRRIEEEKKAFAEARRNMVVDDDSPEMYKTISQEFLTPGKLEINFEELLKQKMEEEKRRTEEERKHKLEMEKQEFEQLRQEMGEEEEENETFGLSREYEELIKLKRSGSIQAKNLKSKFEKIGQLSEKEIQKKIEEERARRRAIDLEIKEREAENFHEEDDVDVRPARKSEAPFTHKVNMKARFEQMAKAREEEEQRRIEEQKLLRMQFEQREIDAALQKKREEEEEEEGSIMNGSTAEDEEQTRSGAPWFKKPLKNTSVVDSEPVRFTVKVTGEPKPEITWWFEGEILQDGEDYQYIERGETYCLYLPETFPEDGGEYMCKAVNNKGSAASTCILTIESKN.

The interval 1–66 (MNDISQKAEI…RKEQYIRERE (66 aa)) is disordered. The residue at position 16 (K16) is a Phosphoserine. Positions 27–66 (GKGDVKDKFEAMQRAREERNQRRSRDEKQRRKEQYIRERE) are enriched in basic and acidic residues. Phosphoserine is present on S80. Residues 105-127 (RFAEMEKQRQEEQRKRTEEERKR) are disordered. S241 bears the Phosphoserine mark. 2 disordered regions span residues 254–278 (LERQ…EEEK) and 313–336 (SFEE…ARRR). Phosphoserine occurs at positions 357 and 365. A Phosphothreonine modification is found at T370. 2 disordered regions span residues 487-513 (ENFH…KVNM) and 551-584 (LQKK…APWF). S564 and S569 each carry phosphoserine. Residues 582-670 (PWFKKPLKNT…GSAASTCILT (89 aa)) enclose the Ig-like domain.

Interacts with F-actin. Abundantly expressed in heart and skeletal muscle, and at lower levels in placenta, lung, liver and pancreas. Also expressed in HeLaS3 and MOLT-4 cell lines.

It is found in the cytoplasm. It localises to the cytoskeleton. The protein resides in the cell junction. The protein localises to the adherens junction. Its subcellular location is the myofibril. It is found in the sarcomere. It localises to the z line. In terms of biological role, involved in regulating cell migration through association with the actin cytoskeleton. Has an essential role in the maintenance of Z line and sarcomere integrity. The chain is Nexilin from Homo sapiens (Human).